A 96-amino-acid polypeptide reads, in one-letter code: Protein RnfH (96 aa).

This sequence belongs to the UPF0125 (RnfH) family.

The protein is Protein RnfH of Hahella chejuensis (strain KCTC 2396).